The following is an 870-amino-acid chain: DNA mismatch repair protein MutS (870 aa).

616–623 (GPNMAGKS) contributes to the ATP binding site.

The protein belongs to the DNA mismatch repair MutS family.

This protein is involved in the repair of mismatches in DNA. It is possible that it carries out the mismatch recognition step. This protein has a weak ATPase activity. The protein is DNA mismatch repair protein MutS of Parabacteroides distasonis (strain ATCC 8503 / DSM 20701 / CIP 104284 / JCM 5825 / NCTC 11152).